The following is a 228-amino-acid chain: NAD(P)H-hydrate epimerase (228 aa).

The YjeF N-terminal domain maps to 9–209 (VRAVERLAHR…LLGLTPAFLA (201 aa)). 53 to 57 (NNGGD) is a binding site for (6S)-NADPHX. 2 residues coordinate K(+): asparagine 54 and aspartate 115. (6S)-NADPHX contacts are provided by residues 119 to 125 (GIGLARP) and aspartate 148. Serine 151 is a K(+) binding site.

The protein belongs to the NnrE/AIBP family. Requires K(+) as cofactor.

The catalysed reaction is (6R)-NADHX = (6S)-NADHX. The enzyme catalyses (6R)-NADPHX = (6S)-NADPHX. Functionally, catalyzes the epimerization of the S- and R-forms of NAD(P)HX, a damaged form of NAD(P)H that is a result of enzymatic or heat-dependent hydration. This is a prerequisite for the S-specific NAD(P)H-hydrate dehydratase to allow the repair of both epimers of NAD(P)HX. The sequence is that of NAD(P)H-hydrate epimerase from Bordetella pertussis (strain CS).